The sequence spans 402 residues: Phosphoglycerate kinase (402 aa).

Substrate is bound by residues 24-26 (DFN), R40, 63-66 (HFGR), R122, and R155. ATP contacts are provided by residues K206, G297, E328, and 357–360 (GGDS).

This sequence belongs to the phosphoglycerate kinase family. As to quaternary structure, monomer.

It is found in the cytoplasm. The enzyme catalyses (2R)-3-phosphoglycerate + ATP = (2R)-3-phospho-glyceroyl phosphate + ADP. It functions in the pathway carbohydrate degradation; glycolysis; pyruvate from D-glyceraldehyde 3-phosphate: step 2/5. The sequence is that of Phosphoglycerate kinase from Parasynechococcus marenigrum (strain WH8102).